Consider the following 195-residue polypeptide: ATP-dependent Clp protease proteolytic subunit 2 (195 aa).

Ser-98 serves as the catalytic Nucleophile. Residue His-123 is part of the active site.

It belongs to the peptidase S14 family. In terms of assembly, fourteen ClpP subunits assemble into 2 heptameric rings which stack back to back to give a disk-like structure with a central cavity, resembling the structure of eukaryotic proteasomes.

It is found in the cytoplasm. It carries out the reaction Hydrolysis of proteins to small peptides in the presence of ATP and magnesium. alpha-casein is the usual test substrate. In the absence of ATP, only oligopeptides shorter than five residues are hydrolyzed (such as succinyl-Leu-Tyr-|-NHMec, and Leu-Tyr-Leu-|-Tyr-Trp, in which cleavage of the -Tyr-|-Leu- and -Tyr-|-Trp bonds also occurs).. Functionally, cleaves peptides in various proteins in a process that requires ATP hydrolysis. Has a chymotrypsin-like activity. Plays a major role in the degradation of misfolded proteins. This Rhodopirellula baltica (strain DSM 10527 / NCIMB 13988 / SH1) protein is ATP-dependent Clp protease proteolytic subunit 2.